We begin with the raw amino-acid sequence, 1127 residues long: Disease resistance protein RPS6 (1127 aa).

Residue methionine 1 is modified to N-acetylmethionine. The TIR domain occupies 12–176; that stretch reads WSYHVFPSFS…EIANDILGKM (165 aa). Glutamate 87 is a catalytic residue. LRR repeat units follow at residues 197–221, 540–563, 587–609, 610–632, 633–656, 658–679, 680–704, 766–790, 791–813, 814–834, and 835–857; these read MSSLLHLESEEVRMVGIWGPSGIGK, IDETDELHIHESSFKGMHNLLFLK, PSRLRLLRFDRYPSKCLPSNFHP, ENLVKLQMQQSKLEKLWDGVHSL, AGLRNMDLRGSRNLKEIPDLSMAT, LETLKLSSCSSLVELPSSIQYL, NKLNDLDMSYCDHLETIPSGVNLKS, SPTLTRLTFSNNPSFVEVPSSIQNL, YQLEHLEIMNCRNLVTLPTGINL, DSLISLDLSHCSQLKTFPDIS, and TNISDLNLSYTAIEEVPLSIEKL.

In terms of assembly, interacts with EDS1. Ubiquitous.

It carries out the reaction NAD(+) + H2O = ADP-D-ribose + nicotinamide + H(+). Its function is as follows. Disease resistance (R) protein that specifically recognizes the hopA1 type III effector avirulence protein from Pseudomonas syringae. Resistance proteins guard the plant against pathogens that contain an appropriate avirulence protein via an indirect interaction with this avirulence protein. That triggers a defense system including the hypersensitive response, which restricts the pathogen growth. This is Disease resistance protein RPS6 from Arabidopsis thaliana (Mouse-ear cress).